The following is a 392-amino-acid chain: Tryptophan synthase beta chain (392 aa).

The residue at position 86 (K86) is an N6-(pyridoxal phosphate)lysine.

The protein belongs to the TrpB family. Tetramer of two alpha and two beta chains. Pyridoxal 5'-phosphate is required as a cofactor.

It carries out the reaction (1S,2R)-1-C-(indol-3-yl)glycerol 3-phosphate + L-serine = D-glyceraldehyde 3-phosphate + L-tryptophan + H2O. It functions in the pathway amino-acid biosynthesis; L-tryptophan biosynthesis; L-tryptophan from chorismate: step 5/5. The beta subunit is responsible for the synthesis of L-tryptophan from indole and L-serine. The protein is Tryptophan synthase beta chain (trpB) of Buchnera aphidicola subsp. Melaphis rhois.